Reading from the N-terminus, the 236-residue chain is (5-formylfuran-3-yl)methyl phosphate synthase (236 aa).

Lys-27 functions as the Schiff-base intermediate with substrate in the catalytic mechanism. The active-site Proton acceptor is the Lys-85.

This sequence belongs to the MfnB family.

The enzyme catalyses 2 D-glyceraldehyde 3-phosphate = 4-(hydroxymethyl)-2-furancarboxaldehyde phosphate + phosphate + 2 H2O. It participates in cofactor biosynthesis; methanofuran biosynthesis. In terms of biological role, catalyzes the formation of 4-(hydroxymethyl)-2-furancarboxaldehyde phosphate (4-HFC-P) from two molecules of glyceraldehyde-3-P (GA-3-P). This Methanococcus maripaludis (strain DSM 14266 / JCM 13030 / NBRC 101832 / S2 / LL) protein is (5-formylfuran-3-yl)methyl phosphate synthase.